The chain runs to 224 residues: Endonuclease NucS (224 aa).

Belongs to the NucS endonuclease family.

The protein resides in the cytoplasm. Functionally, cleaves both 3' and 5' ssDNA extremities of branched DNA structures. The chain is Endonuclease NucS from Rhodococcus jostii (strain RHA1).